The sequence spans 297 residues: Carbamate kinase (297 aa).

It belongs to the carbamate kinase family.

It is found in the cytoplasm. It catalyses the reaction hydrogencarbonate + NH4(+) + ATP = carbamoyl phosphate + ADP + H2O + H(+). The enzyme catalyses carbamate + ATP = carbamoyl phosphate + ADP. The catalysed reaction is hydrogencarbonate + NH4(+) = carbamate + H2O + H(+). It participates in nitrogen metabolism; (S)-allantoin degradation. Its function is as follows. Kinase involved in the anaerobic nitrogen utilization via the assimilation of allantoin. Catalyzes the transfer of a phosphate group from carbamoyl phosphate to ADP to produce ATP and leave carbamate, which spontaneously hydrolyzes to ammonia and hydrogencarbonate. The chain is Carbamate kinase from Escherichia coli O157:H7.